Consider the following 378-residue polypeptide: Putative glutamate--cysteine ligase 2 (378 aa).

This sequence belongs to the glutamate--cysteine ligase type 2 family. YbdK subfamily.

The enzyme catalyses L-cysteine + L-glutamate + ATP = gamma-L-glutamyl-L-cysteine + ADP + phosphate + H(+). In terms of biological role, ATP-dependent carboxylate-amine ligase which exhibits weak glutamate--cysteine ligase activity. The protein is Putative glutamate--cysteine ligase 2 of Bdellovibrio bacteriovorus (strain ATCC 15356 / DSM 50701 / NCIMB 9529 / HD100).